Here is a 436-residue protein sequence, read N- to C-terminus: 3-ketoacyl-CoA thiolase (436 aa).

Cys99 serves as the catalytic Acyl-thioester intermediate. Catalysis depends on proton acceptor residues His392 and Cys422.

The protein belongs to the thiolase-like superfamily. Thiolase family. In terms of assembly, heterotetramer of two alpha chains (FadJ) and two beta chains (FadI).

Its subcellular location is the cytoplasm. The enzyme catalyses an acyl-CoA + acetyl-CoA = a 3-oxoacyl-CoA + CoA. The protein operates within lipid metabolism; fatty acid beta-oxidation. Functionally, catalyzes the final step of fatty acid oxidation in which acetyl-CoA is released and the CoA ester of a fatty acid two carbons shorter is formed. The protein is 3-ketoacyl-CoA thiolase of Aeromonas salmonicida (strain A449).